The chain runs to 246 residues: Small ribosomal subunit protein uS2c (246 aa).

This sequence belongs to the universal ribosomal protein uS2 family.

It localises to the plastid. It is found in the chloroplast. The polypeptide is Small ribosomal subunit protein uS2c (rps2) (Pelargonium hortorum (Common geranium)).